The primary structure comprises 1059 residues: Zinc finger protein 658 (1059 aa).

One can recognise a KRAB domain in the interval 8–79 (VSFQDVTVEF…EDEFLNQRYP (72 aa)). Lys178 is covalently cross-linked (Glycyl lysine isopeptide (Lys-Gly) (interchain with G-Cter in SUMO2)). A C2H2-type 1; degenerate zinc finger spans residues 325-347 (FESNKCEENFSQSSAHIVHQKTQ). Residues 352-375 (FGEHNECTDALYQKLDFTAHQRIH) form a C2H2-type 2; degenerate zinc finger. A C2H2-type 3; degenerate zinc finger spans residues 381 to 406 (YLSDEHGKCRKSFYRKAHLIQHQRPH). Residues 412-434 (YQYEECAKSFCSSSHPIQHPGTY) form a C2H2-type 4; degenerate zinc finger. 14 C2H2-type zinc fingers span residues 440–462 (YECN…LRIH), 518–540 (YECI…QRIH), 546–568 (YECV…QRVH), 574–596 (YECN…QRIH), 602–624 (YECS…HRIH), 630–652 (YECN…QRIH), 658–680 (YECN…QRIH), 686–708 (YECS…QRIH), 714–736 (YECN…QNIH), 742–764 (YECS…RRIH), 770–792 (YECS…ERIH), 798–820 (YECN…QRIH), 826–848 (YECN…QRIH), and 854–876 (YECN…HRIH). The C2H2-type 19; degenerate zinc finger occupies 882–904 (YECNDCGKTFSKTSHLRAHLRTR). 5 consecutive C2H2-type zinc fingers follow at residues 910–932 (YECS…QRVH), 938–960 (YECN…QRIH), 966–988 (YECN…QRIH), 994–1016 (YECN…QRIH), and 1022–1045 (YECD…TRMH).

Belongs to the krueppel C2H2-type zinc-finger protein family.

The protein localises to the nucleus. Mediates transcriptional repression in response to zinc. Represses several genes, including SLC30A5, SLC30A10 and CBWD1, by binding to the zinc transcriptional regulatory element (ZTRE) (5'-C[AC]C[TAG]CC[TC]-N(0-50)-[GA]G[ATC]G[TG]G-3') found in the promoter region. May play a role in the control of ribosome biogenesis, regulating predominantly rRNA levels, as well as those of several ribosomal proteins, thus coordinating this highly zinc-demanding process with the available zinc supply. The protein is Zinc finger protein 658 (ZNF658) of Homo sapiens (Human).